The primary structure comprises 359 residues: 4-hydroxy-2-oxovalerate aldolase 1 (359 aa).

A Pyruvate carboxyltransferase domain is found at 23-275 (VRVTDTSLRD…KTGIDFFDIA (253 aa)). Residue 31 to 32 (RD) coordinates substrate. Mn(2+) is bound at residue Asp32. His35 acts as the Proton acceptor in catalysis. Residues Ser185 and His214 each contribute to the substrate site. Mn(2+)-binding residues include His214 and His216. Tyr305 serves as a coordination point for substrate.

The protein belongs to the 4-hydroxy-2-oxovalerate aldolase family.

The enzyme catalyses (S)-4-hydroxy-2-oxopentanoate = acetaldehyde + pyruvate. The chain is 4-hydroxy-2-oxovalerate aldolase 1 from Mycobacteroides abscessus (strain ATCC 19977 / DSM 44196 / CCUG 20993 / CIP 104536 / JCM 13569 / NCTC 13031 / TMC 1543 / L948) (Mycobacterium abscessus).